An 877-amino-acid polypeptide reads, in one-letter code: Probable alpha/beta-glucosidase agdC (877 aa).

Positions 1 to 14 (MLGSLLLLAPLAGA) are cleaved as a signal peptide. N171, N293, and N373 each carry an N-linked (GlcNAc...) asparagine glycan. Residue D422 is the Nucleophile of the active site. Residue E425 is part of the active site. A disordered region spans residues 432–476 (DPCTDPERYSSENNLPPAPPPVRSSSPRPLPGFPADFQPSSASRS). A compositionally biased stretch (pro residues) spans 447-463 (PPAPPPVRSSSPRPLPG). Residue N508 is glycosylated (N-linked (GlcNAc...) asparagine). D573 serves as the catalytic Proton donor. N-linked (GlcNAc...) asparagine glycosylation is found at N574, N610, and N744.

This sequence belongs to the glycosyl hydrolase 31 family.

The protein resides in the secreted. It catalyses the reaction Hydrolysis of terminal, non-reducing (1-&gt;4)-linked alpha-D-glucose residues with release of alpha-D-glucose.. The enzyme catalyses Hydrolysis of terminal, non-reducing beta-D-glucosyl residues with release of beta-D-glucose.. Functionally, glucosidase involved in the degradation of cellulosic biomass. Has both alpha- and beta-glucosidase activity. This Aspergillus oryzae (strain ATCC 42149 / RIB 40) (Yellow koji mold) protein is Probable alpha/beta-glucosidase agdC (agdC).